Reading from the N-terminus, the 297-residue chain is 2-dehydropantoate 2-reductase (297 aa).

NADP(+) contacts are provided by residues 11–16 (GAGAMG), N107, and A133. Residue N107 coordinates substrate. The active-site Proton donor is the K187. N191, N195, N205, and S251 together coordinate substrate. E263 lines the NADP(+) pocket.

This sequence belongs to the ketopantoate reductase family.

Its subcellular location is the cytoplasm. The enzyme catalyses (R)-pantoate + NADP(+) = 2-dehydropantoate + NADPH + H(+). Its pathway is cofactor biosynthesis; (R)-pantothenate biosynthesis; (R)-pantoate from 3-methyl-2-oxobutanoate: step 2/2. In terms of biological role, catalyzes the NADPH-dependent reduction of ketopantoate into pantoic acid. In Listeria monocytogenes serovar 1/2a (strain ATCC BAA-679 / EGD-e), this protein is 2-dehydropantoate 2-reductase.